Here is a 279-residue protein sequence, read N- to C-terminus: Sulfur carrier protein FdhD (279 aa).

The active-site Cysteine persulfide intermediate is the Cys-122.

It belongs to the FdhD family.

The protein resides in the cytoplasm. In terms of biological role, required for formate dehydrogenase (FDH) activity. Acts as a sulfur carrier protein that transfers sulfur from IscS to the molybdenum cofactor prior to its insertion into FDH. This is Sulfur carrier protein FdhD from Thermoplasma volcanium (strain ATCC 51530 / DSM 4299 / JCM 9571 / NBRC 15438 / GSS1).